The sequence spans 113 residues: Cysteine proteinase inhibitor 6 (113 aa).

The signal sequence occupies residues 1–18 (MAMTTRTLLLAAVCAAAA). Positions 65–69 (QVVSG) match the Secondary area of contact motif.

The protein belongs to the cystatin family. Phytocystatin subfamily.

The protein resides in the secreted. Its function is as follows. Specific inhibitor of cysteine proteinases. Probably involved in the regulation of endogenous processes and in defense against pests and pathogens. The chain is Cysteine proteinase inhibitor 6 from Oryza sativa subsp. japonica (Rice).